A 400-amino-acid polypeptide reads, in one-letter code: Ornithine aminotransferase (400 aa).

Lysine 254 bears the N6-(pyridoxal phosphate)lysine mark.

This sequence belongs to the class-III pyridoxal-phosphate-dependent aminotransferase family. OAT subfamily. It depends on pyridoxal 5'-phosphate as a cofactor.

It localises to the cytoplasm. It carries out the reaction a 2-oxocarboxylate + L-ornithine = L-glutamate 5-semialdehyde + an L-alpha-amino acid. The protein operates within amino-acid biosynthesis; L-proline biosynthesis; L-glutamate 5-semialdehyde from L-ornithine: step 1/1. Its function is as follows. Catalyzes the interconversion of ornithine to glutamate semialdehyde. In Exiguobacterium sp. (strain ATCC BAA-1283 / AT1b), this protein is Ornithine aminotransferase.